The primary structure comprises 522 residues: Calcium-dependent protein kinase 4 (522 aa).

The segment covering 1 to 10 has biased composition (polar residues); that stretch reads MGACFSSHTA. The interval 1–43 is disordered; it reads MGACFSSHTATAAADGGSGKRQQRKGDHKGKLPDGGGGEKEKE. Gly2 carries the N-myristoyl glycine lipid modification. Positions 29–43 are enriched in basic and acidic residues; it reads KGKLPDGGGGEKEKE. Residues 59–319 form the Protein kinase domain; the sequence is YQVGRLLGHG…AAQALSHPWV (261 aa). Residues 65–73 and Lys88 contribute to the ATP site; that span reads LGHGQFGYT. Asp185 acts as the Proton acceptor in catalysis. The segment at 325–355 is autoinhibitory domain; the sequence is ASEIPVDISVLSNMRQFVKYSRFKQFALRAL. EF-hand domains are found at residues 362–397, 399–434, 441–476, and 481–508; these read EELADLKDQFDAIDVDKSGSISIEEMRHALAKDLPW, LKGPRVLEIIQAIDSNTDGLVDFEEFVAATLHIHQM, RWGLRCQAAFSKFDLDGDGYITPDELRMVQHTGLKG, and LLEEADIDKDGRISLSEFRKLLRTASMS. Positions 375, 377, 379, 381, 386, 412, 414, 416, 423, 454, 456, 458, 460, 465, 486, 488, 490, 492, and 497 each coordinate Ca(2+).

This sequence belongs to the protein kinase superfamily. Ser/Thr protein kinase family. CDPK subfamily.

It localises to the membrane. The catalysed reaction is L-seryl-[protein] + ATP = O-phospho-L-seryl-[protein] + ADP + H(+). The enzyme catalyses L-threonyl-[protein] + ATP = O-phospho-L-threonyl-[protein] + ADP + H(+). With respect to regulation, activated by calcium. Autophosphorylation may play an important role in the regulation of the kinase activity. Its function is as follows. May play a role in signal transduction pathways that involve calcium as a second messenger. This is Calcium-dependent protein kinase 4 from Oryza sativa subsp. japonica (Rice).